We begin with the raw amino-acid sequence, 374 residues long: Anhydro-N-acetylmuramic acid kinase (374 aa).

ATP is bound at residue 15 to 22; it reads GTSADGID.

The protein belongs to the anhydro-N-acetylmuramic acid kinase family.

The catalysed reaction is 1,6-anhydro-N-acetyl-beta-muramate + ATP + H2O = N-acetyl-D-muramate 6-phosphate + ADP + H(+). The protein operates within amino-sugar metabolism; 1,6-anhydro-N-acetylmuramate degradation. It functions in the pathway cell wall biogenesis; peptidoglycan recycling. Catalyzes the specific phosphorylation of 1,6-anhydro-N-acetylmuramic acid (anhMurNAc) with the simultaneous cleavage of the 1,6-anhydro ring, generating MurNAc-6-P. Is required for the utilization of anhMurNAc either imported from the medium or derived from its own cell wall murein, and thus plays a role in cell wall recycling. This chain is Anhydro-N-acetylmuramic acid kinase, found in Xanthomonas axonopodis pv. citri (strain 306).